The following is a 741-amino-acid chain: Transketolase-1, chloroplastic (741 aa).

The N-terminal 66 residues, 1-66, are a transit peptide targeting the chloroplast; sequence MASTSSLALS…NRSLRPLVRA (66 aa). Residues 22–51 are disordered; the sequence is GSDQRGSLPAFSGLKSTGSRASASSRRRIA. An N-acetylalanine modification is found at alanine 67. Substrate is bound at residue histidine 103. Thiamine diphosphate-binding positions include histidine 143 and 192-194; that span reads GPL. Aspartate 233 contacts Mg(2+). Glycine 234 and asparagine 263 together coordinate thiamine diphosphate. Mg(2+) is bound by residues asparagine 263 and isoleucine 265. Substrate is bound at residue histidine 340. Histidine 340 serves as a coordination point for thiamine diphosphate. The residue at position 428 (serine 428) is a Phosphoserine. Arginine 434 and serine 461 together coordinate substrate. Positions 488 and 515 each coordinate thiamine diphosphate. The active-site Proton donor is the glutamate 488. The substrate site is built by histidine 539, aspartate 547, and arginine 598.

It belongs to the transketolase family. Homodimer. Mg(2+) serves as cofactor. The cofactor is Ca(2+). It depends on Mn(2+) as a cofactor. Requires Co(2+) as cofactor. Thiamine diphosphate is required as a cofactor.

The protein localises to the plastid. Its subcellular location is the chloroplast stroma. It carries out the reaction D-sedoheptulose 7-phosphate + D-glyceraldehyde 3-phosphate = aldehydo-D-ribose 5-phosphate + D-xylulose 5-phosphate. It participates in carbohydrate biosynthesis; Calvin cycle. Functionally, catalyzes the reversible transfer of a two-carbon ketol group from fructose-6-phosphate or sedoheptulose-7-phosphate to glyceraldehyde-3-phosphate to yield xylulose-5-phosphate and erythrose-4-phosphate or ribose-5-phosphate, respectively. Could act as a stress sensor involved in adaptation process. The protein is Transketolase-1, chloroplastic (TKL-1) of Arabidopsis thaliana (Mouse-ear cress).